Consider the following 218-residue polypeptide: 4-coumaroyl-homoserine lactone synthase (218 aa).

The protein belongs to the autoinducer synthase family.

It catalyses the reaction 4-coumaroyl-CoA + S-adenosyl-L-methionine = N-(4-coumaroyl)-L-homoserine lactone + S-methyl-5'-thioadenosine + CoA + H(+). Its function is as follows. Catalyzes the synthesis of 4-coumaroyl-homoserine lactone, a quorum-sensing (QS) autoinducer molecule which binds to RpaR transcriptional regulator to regulate expression of QS-dependent genes. The polypeptide is 4-coumaroyl-homoserine lactone synthase (Rhodopseudomonas palustris (strain ATCC BAA-98 / CGA009)).